A 200-amino-acid polypeptide reads, in one-letter code: ADP-ribosylation factor-like protein 4D (200 aa).

Residue G2 is the site of N-myristoyl glycine attachment. Residues 27-34 (GLDSAGKT), 75-79 (DVGGQ), and 134-137 (NKQD) each bind GTP.

This sequence belongs to the small GTPase superfamily. Arf family. In terms of assembly, interacts with CYTH2; the interaction is direct and ARL4D GTP-dependent. Does not interact with ARL4D.

Its subcellular location is the nucleus. It is found in the nucleolus. The protein localises to the cell membrane. The protein resides in the cytoplasm. Functionally, small GTP-binding protein which cycles between an inactive GDP-bound and an active GTP-bound form, and the rate of cycling is regulated by guanine nucleotide exchange factors (GEF) and GTPase-activating proteins (GAP). GTP-binding protein that does not act as an allosteric activator of the cholera toxin catalytic subunit. Recruits CYTH1, CYTH2, CYTH3 and CYTH4 to the plasma membrane in GDP-bound form. The protein is ADP-ribosylation factor-like protein 4D (ARL4D) of Bos taurus (Bovine).